We begin with the raw amino-acid sequence, 471 residues long: MEFDCEGLRRLLGKYKFRDLTVEELRNVNVFFPHFKYSMDTYVFKDSSQKDLLNFTGTIPVMYQGNTYNIPIRFWILDSHPFAPPICFLKPTANMGILVGKHVDAQGRIYLPYLQNWSHPKSVIVGLIKEMIAKFQEELPMYSLSSSDEARQVDLLAYIAKITEGVSDTNSKSWANHENKTVNKITVVGGGELGIACTLAISAKGIADRLVLLDLSEGTKGATMDLEIFNLPNVEISKDLSASAHSKVVIFTVNSLGSSQSYLDVVQSNVDMFRALVPALGHYSQHSVLLVASQPVEIMTYVTWKLSTFPANRVIGIGCNLDSQRLQYIITNVLKAQTSGKEVWVIGEQGEDKVLTWSGQEEVVSHTSQVQLSNRAMELLRVKGQRSWSVGLSVADMVDSIVNNKKKVHSVSALAKGYYDINSEVFLSLPCILGTNGVSEVIKTTLKEDTVTEKLQSSASSIHSLQQQLKL.

The 144-residue stretch at 2–145 folds into the UEV domain; it reads EFDCEGLRRL…QEELPMYSLS (144 aa). 191–219 provides a ligand contact to NAD(+); sequence GELGIACTLAISAKGIADRLVLLDLSEGT.

In the N-terminal section; belongs to the ubiquitin-conjugating enzyme family. UEV subfamily. It in the C-terminal section; belongs to the LDH/MDH superfamily. As to quaternary structure, homodimer. In terms of tissue distribution, colon, colon carcinoma cell lines, normal cervical epithelium, carcinomas of the uterine cervix and peripheral blood leukocytes.

Its function is as follows. Possible negative regulator of polyubiquitination. This Homo sapiens (Human) protein is Ubiquitin-conjugating enzyme E2 variant 3.